The following is a 185-amino-acid chain: dTDP-4-dehydrorhamnose 3,5-epimerase (185 aa).

Residues arginine 23, glutamate 28, 47 to 49 (QDN), and arginine 59 each bind substrate. The active-site Proton acceptor is the histidine 62. Residues lysine 72 and histidine 119 each coordinate substrate. Tyrosine 132 acts as the Proton donor in catalysis. Aspartate 143 and lysine 168 together coordinate substrate.

Belongs to the dTDP-4-dehydrorhamnose 3,5-epimerase family. Homodimer.

It carries out the reaction dTDP-4-dehydro-6-deoxy-alpha-D-glucose = dTDP-4-dehydro-beta-L-rhamnose. The protein operates within carbohydrate biosynthesis; dTDP-L-rhamnose biosynthesis. It functions in the pathway bacterial outer membrane biogenesis; LPS O-antigen biosynthesis. In terms of biological role, catalyzes the epimerization of the C3' and C5'positions of dTDP-6-deoxy-D-xylo-4-hexulose, forming dTDP-6-deoxy-L-lyxo-4-hexulose. This is dTDP-4-dehydrorhamnose 3,5-epimerase (rfbC) from Escherichia coli (strain K12).